The sequence spans 502 residues: Neuronal acetylcholine receptor subunit alpha-7 (502 aa).

Residues 1–22 (MCGRRGGIWLALAAALLHVSLQ) form the signal peptide. Residues 23–233 (GEFQRRLYKE…VTMRRRTLYY (211 aa)) are Extracellular-facing. Positions 42 and 44 each coordinate Ca(2+). N-linked (GlcNAc...) asparagine glycosylation is found at N46, N90, and N133. The cysteines at positions 150 and 164 are disulfide-linked. Residues S172 and Y210 each contribute to the Ca(2+) site. C212 and C213 form a disulfide bridge. 3 consecutive transmembrane segments (helical) span residues 234–254 (GLNL…VFLL), 262–282 (ISLG…VAEI), and 295–315 (QYFA…VIVL). The tract at residues 260-267 (EKISLGIT) is essential for TMEM35A/NACHO-mediated proper subunit assembly and trafficking to cell membrane. Residues 316–469 (RYHHHDPDGG…WKFAACVVDR (154 aa)) lie on the Cytoplasmic side of the membrane. A helical transmembrane segment spans residues 470-490 (LCLMAFSVFTIICTIGILMSA).

The protein belongs to the ligand-gated ion channel (TC 1.A.9) family. Acetylcholine receptor (TC 1.A.9.1) subfamily. Alpha-7/CHRNA7 sub-subfamily. As to quaternary structure, homopentamer. Can also form heteropentamers with CHRNB2, mainly found in basal forebrain cholinergic neurons. Interacts with RIC3; which is required for proper folding and assembly. Interacts with LYPD6. Interacts with CANX. In terms of processing, glycosylations at Asn-46, Asn-90 and Asn-133 are essential for TMEM35A/NACHO-mediated proper subunit assembly and trafficking to the cell membrane. As to expression, higly expressed in brain. ALso expressed in immune cells sucha as macrophages.

The protein resides in the postsynaptic cell membrane. The protein localises to the cell membrane. The enzyme catalyses K(+)(in) = K(+)(out). The catalysed reaction is Na(+)(in) = Na(+)(out). It carries out the reaction Ca(2+)(in) = Ca(2+)(out). It catalyses the reaction choline(out) = choline(in). The enzyme catalyses NH4(+)(in) = NH4(+)(out). The catalysed reaction is L-arginine(in) = L-arginine(out). It carries out the reaction guanidine(out) = guanidine(in). Activated by a myriad of ligands such as acetylcholine, cytisine, nicotine, choline and epibatidine. Oligomeric amyloid-beta protein 42 activates specifially CHRNA7:CHRNB2 nAchRs. Activity is modulated by positive allosteric modulators (PAMs), such as flavonoids, with a wide range of chemical diversity, pharmacological sensitivity and efficacy. AChR activity is inhibited by the antagonists alpha-conotoxons RgIA, ImI and ImII, small disulfide-constrained peptides from cone snails. Its function is as follows. Component of neuronal acetylcholine receptors (nAChRs) that function as pentameric, ligand-gated cation channels with high calcium permeability among other activities. nAChRs are excitatory neurotrasnmitter receptors formed by a collection of nAChR subunits known to mediate synaptic transmission in the nervous system and the neuromuscular junction. Each nAchR subunit confers differential attributes to channel properties, including activation, deactivation and desensitization kinetics, pH sensitivity, cation permeability, and binding to allosteric modulators. CHRNA7 forms homopentameric neuronal acetylcholine receptors abundantly expressed in the central nervous system, characterized by fast desensitization and high calcium permeability. Also forms heteropentamers with CHRNB2, mainly expressed in basal forebrain cholinergic neurons. Involved in the modulation of calcium-dependent signaling pathways and influences the release of neurotransmitters, including dopamine, glutamate and GABA. Involved in the modulation of calcium-dependent signaling pathways and influences the release of neurotransmitters, including dopamine, glutamate and GABA. Also expressed in non-neuronal cells such as immune cells like lymphocytes, monocytes and macrophages. In T cells, activation induces metabotropic signaling that results in an increase of intracellular Ca2+ concentrations, independent of ionotropic receptor functions. In macrophages, required for acetylcholine-mediated inhibition of TNF and other inflammatory cytokine release. Once activated by acetylcholine, nicotine or other agonists, selectively inhibits production of pro-inflammatory cytokines while leaving anti-inflammatory cytokines undisturbed. Stimulates the cholinergic anti-inflammatory pathway, controlling inflammation by inhibiting NFKB nuclear translocation and activating the JAK2-STAT3 pathway, independently of ion channel activity. Also expressed in the urothelium where it modulates reflex bladder activity by increasing intracellular calcium through internal stores and decreasing basal ATP release. This chain is Neuronal acetylcholine receptor subunit alpha-7 (Chrna7), found in Mus musculus (Mouse).